Here is a 336-residue protein sequence, read N- to C-terminus: 3-isopropylmalate dehydrogenase (336 aa).

Arg87, Arg97, Arg121, and Asp211 together coordinate substrate. Residues Asp211, Asp235, and Asp239 each contribute to the Mg(2+) site. 271-283 serves as a coordination point for NAD(+); the sequence is GSAPDIAGQGIAD.

Belongs to the isocitrate and isopropylmalate dehydrogenases family. LeuB type 2 subfamily. As to quaternary structure, homodimer. Mg(2+) serves as cofactor. The cofactor is Mn(2+).

It localises to the cytoplasm. The enzyme catalyses (2R,3S)-3-isopropylmalate + NAD(+) = 4-methyl-2-oxopentanoate + CO2 + NADH. It functions in the pathway amino-acid biosynthesis; L-leucine biosynthesis; L-leucine from 3-methyl-2-oxobutanoate: step 3/4. Catalyzes the oxidation of 3-carboxy-2-hydroxy-4-methylpentanoate (3-isopropylmalate) to 3-carboxy-4-methyl-2-oxopentanoate. The product decarboxylates to 4-methyl-2 oxopentanoate. The polypeptide is 3-isopropylmalate dehydrogenase (Rhodococcus jostii (strain RHA1)).